The chain runs to 274 residues: Hydroxyethylthiazole kinase (274 aa).

Met-54 contributes to the substrate binding site. Residues Arg-129 and Thr-175 each contribute to the ATP site. Gly-202 contributes to the substrate binding site.

This sequence belongs to the Thz kinase family. Requires Mg(2+) as cofactor.

The enzyme catalyses 5-(2-hydroxyethyl)-4-methylthiazole + ATP = 4-methyl-5-(2-phosphooxyethyl)-thiazole + ADP + H(+). It functions in the pathway cofactor biosynthesis; thiamine diphosphate biosynthesis; 4-methyl-5-(2-phosphoethyl)-thiazole from 5-(2-hydroxyethyl)-4-methylthiazole: step 1/1. Its function is as follows. Catalyzes the phosphorylation of the hydroxyl group of 4-methyl-5-beta-hydroxyethylthiazole (THZ). The protein is Hydroxyethylthiazole kinase of Granulibacter bethesdensis (strain ATCC BAA-1260 / CGDNIH1).